Consider the following 95-residue polypeptide: uncharacterized protein (95 aa).

It belongs to the asfivirus DP96R family.

This is an uncharacterized protein from African swine fever virus (isolate Warthog/Namibia/Wart80/1980) (ASFV).